We begin with the raw amino-acid sequence, 270 residues long: Tryptophan synthase alpha chain (270 aa).

Active-site proton acceptor residues include Glu-49 and Asp-60.

Belongs to the TrpA family. As to quaternary structure, tetramer of two alpha and two beta chains.

It carries out the reaction (1S,2R)-1-C-(indol-3-yl)glycerol 3-phosphate + L-serine = D-glyceraldehyde 3-phosphate + L-tryptophan + H2O. The protein operates within amino-acid biosynthesis; L-tryptophan biosynthesis; L-tryptophan from chorismate: step 5/5. The alpha subunit is responsible for the aldol cleavage of indoleglycerol phosphate to indole and glyceraldehyde 3-phosphate. This chain is Tryptophan synthase alpha chain, found in Thermobifida fusca (strain YX).